The sequence spans 412 residues: Serine hydroxymethyltransferase (412 aa).

(6S)-5,6,7,8-tetrahydrofolate contacts are provided by residues Leu121 and 125–127 (GHL). Lys230 is subject to N6-(pyridoxal phosphate)lysine. 353 to 355 (TPF) contacts (6S)-5,6,7,8-tetrahydrofolate.

This sequence belongs to the SHMT family. Homodimer. Pyridoxal 5'-phosphate is required as a cofactor.

It is found in the cytoplasm. The enzyme catalyses (6R)-5,10-methylene-5,6,7,8-tetrahydrofolate + glycine + H2O = (6S)-5,6,7,8-tetrahydrofolate + L-serine. Its pathway is one-carbon metabolism; tetrahydrofolate interconversion. The protein operates within amino-acid biosynthesis; glycine biosynthesis; glycine from L-serine: step 1/1. In terms of biological role, catalyzes the reversible interconversion of serine and glycine with tetrahydrofolate (THF) serving as the one-carbon carrier. This reaction serves as the major source of one-carbon groups required for the biosynthesis of purines, thymidylate, methionine, and other important biomolecules. Also exhibits THF-independent aldolase activity toward beta-hydroxyamino acids, producing glycine and aldehydes, via a retro-aldol mechanism. This chain is Serine hydroxymethyltransferase, found in Finegoldia magna (strain ATCC 29328 / DSM 20472 / WAL 2508) (Peptostreptococcus magnus).